The following is a 214-amino-acid chain: EEF1A lysine methyltransferase 1 (214 aa).

At Ser-2 the chain carries N-acetylserine. The residue at position 2 (Ser-2) is a Phosphoserine.

Belongs to the class I-like SAM-binding methyltransferase superfamily. EFM5 family.

It localises to the cytoplasm. The enzyme catalyses L-lysyl-[protein] + 3 S-adenosyl-L-methionine = N(6),N(6),N(6)-trimethyl-L-lysyl-[protein] + 3 S-adenosyl-L-homocysteine + 3 H(+). Its function is as follows. Protein N-lysine methyltransferase that selectively catalyzes the trimethylation of EEF1A at 'Lys-79'. The polypeptide is EEF1A lysine methyltransferase 1 (Homo sapiens (Human)).